The following is a 966-amino-acid chain: Protein mes-1 (966 aa).

The signal sequence occupies residues 1–19; it reads MKIHHFLTLLCTFLPLTTT. Residues 20-470 lie on the Extracellular side of the membrane; it reads ALTNSTPLSL…QASDIPTSVE (451 aa). 6 N-linked (GlcNAc...) asparagine glycosylation sites follow: N62, N126, N183, N214, N251, and N372. A helical transmembrane segment spans residues 471-491; that stretch reads LMAVVLATSAIFALIALFLLY. Topologically, residues 492-966 are cytoplasmic; the sequence is RKRKRDKKAR…FKSVNVAATV (475 aa). The Protein kinase domain maps to 656–966; the sequence is HNFNERIEKQ…FKSVNVAATV (311 aa). ATP contacts are provided by residues 662–670 and K685; that span reads IEKQAYWLM.

Belongs to the protein kinase superfamily.

The protein localises to the cell membrane. During early embryogenesis, controls asymmetric cell division and the asymmetric localization of P granules of germline precursor P2 and its descendant P3. Probably upstream of tyrosine kinase src-1, plays a role in endoderm development by controlling spindle orientation during EMS blastomere cell division. Controls EMS spindle orientation probably by promoting lin-5 and gpr-1/2 enrichment at, and let-99 exclusion from the junction between P2 and EMS cells. This Caenorhabditis elegans protein is Protein mes-1.